Reading from the N-terminus, the 303-residue chain is MYYGFDIGGTKIALGVFDSGRQLQWEKRVPTPRDSYDAFLDAVCELVAEADRRFGCKGSVGIGIPGMPETEDGTLYAANVPAASGKPLRADLSARLDRDVRLDNDANCFALSEAWDDEFTQYPLVMGLILGTGVGGGLIFNGKPITGKSYITGEFGHMRLPVDALTMMGLDFPLRRCGCGQHGCIENYLSGRGFAWLYQHYYHQPLQAPEIIALYDQGDEQARAHVERYLDLLAVCLGNILTIVDPDLVVIGGGLSNFPAITTQLAERLPRHLLPVARVPRIERARHGDAGGMRGAAFLHLTD.

ATP contacts are provided by residues 4–11 (GFDIGGTK) and 133–140 (GVGGGLIF). Zn(2+) is bound by residues His-157, Cys-177, Cys-179, and Cys-184.

This sequence belongs to the ROK (NagC/XylR) family. NagK subfamily.

The catalysed reaction is N-acetyl-D-glucosamine + ATP = N-acetyl-D-glucosamine 6-phosphate + ADP + H(+). Its pathway is cell wall biogenesis; peptidoglycan recycling. Its function is as follows. Catalyzes the phosphorylation of N-acetyl-D-glucosamine (GlcNAc) derived from cell-wall degradation, yielding GlcNAc-6-P. This chain is N-acetyl-D-glucosamine kinase, found in Escherichia coli O81 (strain ED1a).